Here is a 1843-residue protein sequence, read N- to C-terminus: Protein TIC 214 (1843 aa).

The next 6 helical transmembrane spans lie at 18 to 38, 64 to 84, 87 to 107, 124 to 144, 172 to 192, and 217 to 237; these read IINS…FSIG, FITG…HLAL, PHTI…WNNH, LSIQ…HFIL, VGWL…LFWI, and IFSI…PSPI. Disordered regions lie at residues 244–281, 557–576, 582–647, 724–744, and 1527–1586; these read ETSK…AAEK, EEIE…SRKA, FTDN…DEVA, NSEE…RQEN, and SLEL…KKKK. Acidic residues predominate over residues 251-264; that stretch reads REESEEETDVEIET. The span at 269-281 shows a compositional bias: basic and acidic residues; sequence KGTKQEQEGAAEK. Residues 590-639 show a composition bias toward low complexity; that stretch reads NTPTSTTETTSTAETTSTTETTSTTKNTSTTKNTSTTETTSTTENENTSN. 2 stretches are compositionally biased toward basic and acidic residues: residues 730 to 744 and 1527 to 1540; these read TKEK…RQEN and SLEL…KKPA. The span at 1543–1562 shows a compositional bias: polar residues; the sequence is NIGSDTQKQGNPGSDPSTQQ. Over residues 1563-1580 the composition is skewed to basic and acidic residues; the sequence is KDIKKNVKEDYDGRSDIQ.

The protein belongs to the TIC214 family. In terms of assembly, part of the Tic complex.

The protein localises to the plastid. The protein resides in the chloroplast inner membrane. Involved in protein precursor import into chloroplasts. May be part of an intermediate translocation complex acting as a protein-conducting channel at the inner envelope. This is Protein TIC 214 from Nandina domestica (Heavenly bamboo).